The sequence spans 266 residues: Putative carbamate hydrolase RutD (266 aa).

It belongs to the AB hydrolase superfamily. Hydrolase RutD family.

It carries out the reaction carbamate + 2 H(+) = NH4(+) + CO2. Its function is as follows. Involved in pyrimidine catabolism. May facilitate the hydrolysis of carbamate, a reaction that can also occur spontaneously. This chain is Putative carbamate hydrolase RutD, found in Escherichia coli O157:H7.